The primary structure comprises 322 residues: MIEFGNFYQLIAKSPLSHWLETLPAQIATWQRDQHGLFKQWSNAVEFLPELTPYRLDLLHSVTAESETPLSEGQLKRIDTLLRNLMPWRKGPFSLYGINIDTEWRSDWKWDRVLPHLSDLTGRTILDVGCGSGYHMWRMIGAGAHLAVGIDPTQLFLCQFEAVRKLLGNDQRAHLLPLGIEQLPALNTFDTVFSMGVLYHRRSPLEHLWQLKDQLVKDGELVLETLVVEGDENTVLVPGDRYAQMRNVYFIPSALALKNWLEKCGFVDVRIADVCVTSTEEQRRTGWMVTESLADFLDPNDHSKTVEGYPAPLRAVLIARKP.

Carboxy-S-adenosyl-L-methionine-binding positions include Lys90, Trp104, Lys109, Gly129, 151 to 153 (DPT), 180 to 181 (IE), Met195, Tyr199, and Arg314.

It belongs to the class I-like SAM-binding methyltransferase superfamily. CmoB family. As to quaternary structure, homotetramer.

It carries out the reaction carboxy-S-adenosyl-L-methionine + 5-hydroxyuridine(34) in tRNA = 5-carboxymethoxyuridine(34) in tRNA + S-adenosyl-L-homocysteine + H(+). Functionally, catalyzes carboxymethyl transfer from carboxy-S-adenosyl-L-methionine (Cx-SAM) to 5-hydroxyuridine (ho5U) to form 5-carboxymethoxyuridine (cmo5U) at position 34 in tRNAs. The polypeptide is tRNA U34 carboxymethyltransferase (Citrobacter koseri (strain ATCC BAA-895 / CDC 4225-83 / SGSC4696)).